The primary structure comprises 431 residues: Tyrosine--tRNA ligase (431 aa).

Residue Y33 participates in L-tyrosine binding. The 'HIGH' region motif lies at 38-47 (PTADSLHIGS). Residues Y172 and Q176 each contribute to the L-tyrosine site. Residues 234–238 (KFGKS) carry the 'KMSKS' region motif. An ATP-binding site is contributed by K237. The S4 RNA-binding domain maps to 364–431 (LDIVTVLNEK…KKNYFVIRVV (68 aa)).

The protein belongs to the class-I aminoacyl-tRNA synthetase family. TyrS type 1 subfamily. Homodimer.

The protein resides in the cytoplasm. The enzyme catalyses tRNA(Tyr) + L-tyrosine + ATP = L-tyrosyl-tRNA(Tyr) + AMP + diphosphate + H(+). In terms of biological role, catalyzes the attachment of tyrosine to tRNA(Tyr) in a two-step reaction: tyrosine is first activated by ATP to form Tyr-AMP and then transferred to the acceptor end of tRNA(Tyr). In Flavobacterium johnsoniae (strain ATCC 17061 / DSM 2064 / JCM 8514 / BCRC 14874 / CCUG 350202 / NBRC 14942 / NCIMB 11054 / UW101) (Cytophaga johnsonae), this protein is Tyrosine--tRNA ligase.